The following is a 735-amino-acid chain: Disintegrin and metalloproteinase domain-containing protein 2 (735 aa).

The signal sequence occupies residues 1–16; the sequence is MWRVLFLLSGLGGLWM. A propeptide spanning residues 17–174 is cleaved from the precursor; sequence DSNFDSLPVQ…FKLQSIEPQK (158 aa). The Extracellular segment spans residues 17–686; it reads DSNFDSLPVQ…ENVYHSKPMR (670 aa). N-linked (GlcNAc...) asparagine glycosylation is found at asparagine 76, asparagine 122, and asparagine 220. The Peptidase M12B domain occupies 178–375; it reads KYIEMHVVVE…QKSQCLHNQP (198 aa). 4 disulfide bridges follow: cysteine 287–cysteine 370, cysteine 329–cysteine 354, cysteine 331–cysteine 336, and cysteine 445–cysteine 465. N-linked (GlcNAc...) asparagine glycans are attached at residues asparagine 353, asparagine 459, and asparagine 566. Residues 384-473 enclose the Disintegrin domain; that stretch reads QAVCGNAKLE…SCPENHFIQT (90 aa). In terms of domain architecture, EGF-like spans 612–645; the sequence is LGYDCTTDKCNHRGVCNNKKHCHCSASYLPPDCS. Disulfide bonds link cysteine 616–cysteine 627, cysteine 621–cysteine 633, and cysteine 635–cysteine 644. Residues 687–707 traverse the membrane as a helical segment; the sequence is WPLFLFIPFFIIFCVLIAIMV. The Cytoplasmic portion of the chain corresponds to 708–735; the sequence is KVHFQRKKWRTEDYSTDEQPESESEPKG. Phosphoserine is present on serine 729.

As to quaternary structure, heterodimer with ADAM1/fertilin subunit alpha. The signal and the metalloprotease domain are cleaved during the epididymal maturation of the spermatozoa. Expressed specifically in testis.

The protein resides in the membrane. Sperm surface membrane protein that may be involved in sperm-egg plasma membrane adhesion and fusion during fertilization. Could have a direct role in sperm-zona binding or migration of sperm from the uterus into the oviduct. Interactions with egg membrane could be mediated via binding between its disintegrin-like domain to one or more integrins receptors on the egg. This is a non catalytic metalloprotease-like protein. The sequence is that of Disintegrin and metalloproteinase domain-containing protein 2 (ADAM2) from Macaca fascicularis (Crab-eating macaque).